Here is a 372-residue protein sequence, read N- to C-terminus: Cytochrome b (372 aa).

Transmembrane regions (helical) follow at residues 25-45, 69-90, 105-125, and 170-190; these read FGSM…FLAI, WIMQ…YIHI, WFSG…GYVL, and FFAL…IHII. Heme b-binding residues include H75 and H89. Heme b is bound by residues H174 and H188. H193 is an a ubiquinone binding site. A run of 4 helical transmembrane segments spans residues 218 to 238, 280 to 300, 312 to 332, and 339 to 358; these read YKDM…LSFM, LGGT…PFTH, LAQT…WTAT, and FILI…IMNP.

Belongs to the cytochrome b family. As to quaternary structure, the cytochrome bc1 complex contains 3 respiratory subunits (MT-CYB, CYC1 and UQCRFS1), 2 core proteins (UQCRC1 and UQCRC2) and probably 6 low-molecular weight proteins. The cofactor is heme b.

Its subcellular location is the mitochondrion inner membrane. Its function is as follows. Component of the ubiquinol-cytochrome c reductase complex (complex III or cytochrome b-c1 complex) that is part of the mitochondrial respiratory chain. The b-c1 complex mediates electron transfer from ubiquinol to cytochrome c. Contributes to the generation of a proton gradient across the mitochondrial membrane that is then used for ATP synthesis. In Sinomicrurus japonicus (Coral snake), this protein is Cytochrome b (MT-CYB).